The chain runs to 126 residues: Small ribosomal subunit protein uS8 (126 aa).

The protein belongs to the universal ribosomal protein uS8 family. As to quaternary structure, part of the 30S ribosomal subunit. Contacts proteins S5 and S12.

Its function is as follows. One of the primary rRNA binding proteins, it binds directly to 16S rRNA central domain where it helps coordinate assembly of the platform of the 30S subunit. This chain is Small ribosomal subunit protein uS8, found in Lawsonia intracellularis (strain PHE/MN1-00).